We begin with the raw amino-acid sequence, 709 residues long: Leucine-rich repeat-containing protein 4B (709 aa).

Positions 1-38 are cleaved as a signal peptide; that stretch reads MAQAHIQGSPCPLLPPGRMSWPQGALLLLWLFSPPLRA. One can recognise an LRRNT domain in the interval 50–88; sequence GGGSPPATSCPAACSCSNQASRVICTRRELAEVPASIPV. 9 LRR repeats span residues 89–110, 113–134, 137–158, 161–182, 185–207, 210–231, 232–253, 256–277, and 280–301; these read NTRYLNLQENSIQVIRTDTFKH, HLEILQLSKNLVRKIEVGAFNG, SLNTLELFDNRLTTVPTQAFEY, KLRELWLRNNPIESIPSYAFNR, SLRRLDLGELKRLEYISEAAFEG, NLRYLNLGMCNLKDIPNLTALV, RLEELELSGNRLDLIRPGSFQG, SLRKLWLMHAQVATIERNAFDD, and SLEELNLSHNNLMSLPHDLFTP. The LRRCT domain occupies 313 to 365; sequence NPWHCNCDVLWLSWWLKETVPSNTTCCARCHAPAGLKGRYIGELDQSHFTCYA. In terms of domain architecture, Ig-like C2-type spans 366–454; that stretch reads PVIVEPPTDL…GNTTASATLN (89 aa). Asn-376, Asn-402, Asn-424, Asn-427, and Asn-446 each carry an N-linked (GlcNAc...) asparagine glycan. A disulfide bridge links Cys-387 with Cys-438. A disordered region spans residues 496 to 552; the sequence is TQPGEEAQQPRGTEKEPPGPTTDGAWGGGRPDAAAPASASTTAPAPRSSRPTEKAFT. The span at 528–544 shows a compositional bias: low complexity; it reads AAAPASASTTAPAPRSS. The chain crosses the membrane as a helical span at residues 575–595; that stretch reads IIIGCFVAITFMAAVMLVAFY. Ser-689 is subject to Phosphoserine.

In terms of assembly, interacts with PTPRF. Interacts with DLG4. In terms of processing, N-glycosylated. O-glycosylated; contains sialic acid. As to expression, mainly expressed in the brain. Widespread distribution in various brain regions (at protein level). Detected both embryonically and postnatally with stronger expression in postnatal stages.

It localises to the membrane. The protein localises to the presynaptic cell membrane. Functionally, synaptic adhesion protein. Regulates the formation of excitatory synapses. The trans-synaptic adhesion between LRRC4B and PTPRF regulates the formation of excitatory synapses in a bidirectional manner. This Rattus norvegicus (Rat) protein is Leucine-rich repeat-containing protein 4B (Lrrc4b).